A 734-amino-acid chain; its full sequence is Histone-lysine N-methyltransferase SET9 (734 aa).

In terms of domain architecture, SET spans Cys-116–Ser-230. 4 disordered regions span residues Phe-343–Thr-459, Ala-523–Ala-543, Ala-567–Val-591, and Arg-681–Gln-734. Positions Glu-407 to Pro-418 are enriched in basic and acidic residues. Polar residues predominate over residues Ser-527 to Ala-543. A compositionally biased stretch (basic and acidic residues) spans Ser-578–Arg-587.

It belongs to the class V-like SAM-binding methyltransferase superfamily. Histone-lysine methyltransferase family. Suvar4-20 subfamily.

The protein resides in the nucleus. Its subcellular location is the chromosome. The enzyme catalyses L-lysyl(20)-[histone H4] + 3 S-adenosyl-L-methionine = N(6),N(6),N(6)-trimethyl-L-lysyl(20)-[histone H4] + 3 S-adenosyl-L-homocysteine + 3 H(+). Histone methyltransferase that trimethylates 'Lys-20' of histone H4 to form H4K20me3. This Chaetomium globosum (strain ATCC 6205 / CBS 148.51 / DSM 1962 / NBRC 6347 / NRRL 1970) (Soil fungus) protein is Histone-lysine N-methyltransferase SET9 (SET9).